Here is a 391-residue protein sequence, read N- to C-terminus: Zinc finger protein ubi-d4 (391 aa).

The residue at position 2 (Ala-2) is an N-acetylalanine. Glycyl lysine isopeptide (Lys-Gly) (interchain with G-Cter in SUMO2) cross-links involve residues Lys-10, Lys-99, Lys-107, and Lys-108. 2 disordered regions span residues 79 to 146 and 165 to 196; these read WRKK…LGEF and DDLD…ARKK. 2 stretches are compositionally biased toward basic and acidic residues: residues 100-110 and 126-140; these read PDTDQTLKKEG and DPLE…RVDD. Ser-142 carries the phosphoserine modification. A compositionally biased stretch (acidic residues) spans 165-174; it reads DDLDDEDYEE. Position 172 is a phosphotyrosine (Tyr-172). Thr-176 is subject to Phosphothreonine. Glycyl lysine isopeptide (Lys-Gly) (interchain with G-Cter in SUMO2) cross-links involve residues Lys-178 and Lys-196. Position 200 is a phosphoserine (Ser-200). Residues 209–232 form a C2H2-type zinc finger; it reads YACDICGKRYKNRPGLSYHYAHSH. Residues 233 to 266 form a disordered region; it reads LAEEEGEDKEDSQPPTPVSQRSEEQKSKKGPDGL. Position 244 is a phosphoserine (Ser-244). A compositionally biased stretch (basic and acidic residues) spans 253–263; that stretch reads RSEEQKSKKGP. 2 consecutive PHD-type zinc fingers follow at residues 270–330 and 327–377; these read NNYC…CKCC and CKCC…CLDL. Residue Ser-280 is modified to Phosphoserine. Lys-281 is covalently cross-linked (Glycyl lysine isopeptide (Lys-Gly) (interchain with G-Cter in SUMO2)).

It belongs to the requiem/DPF family. In terms of assembly, interacts with the nucleosomes, in particular nucleosomes bearing histone H3 crotonylated at 'Lys-14' (H3K14cr) for which DPF2 has high affinity. Also interacts (via PHD-type zinc finger domains) with histone H3 butyrylated at 'Lys-14' (H3K14bu), histone H3 propionylated at 'Lys-14' (H3K14pr), and histone H3 acetylated at 'Lys-14' (H3K14ac). Interacts with histone H3 acetylated at 'Lys-9' (H3K9ac), histone H3 di-methylated at 'Lys-9' (H3K9me2), and histone H3 tri-methylated at 'Lys-9' (H3K9me3). Interacts with histone H4 acetylated at 'Lys-12' (H4K12ac). Interacts with histone H4 acetylated at 'Lys-16' (H4K16ac). Interacts with SWI/SNF complex components. Interacts with SMARCA2, SMARCA4, SMARCB1 and SMARCD1. Interacts with SMARCC1, SMARCC2 and ACTL6A. Interacts with RUNX1. In terms of tissue distribution, ubiquitous.

The protein localises to the nucleus. It localises to the cytoplasm. Its function is as follows. Plays an active role in transcriptional regulation by binding modified histones H3 and H4. Is a negative regulator of myeloid differentiation of hematopoietic progenitor cells. Might also have a role in the development and maturation of lymphoid cells. Involved in the regulation of non-canonical NF-kappa-B pathway. The chain is Zinc finger protein ubi-d4 (DPF2) from Homo sapiens (Human).